Consider the following 396-residue polypeptide: Tryptophan synthase beta chain (396 aa).

Lys86 is subject to N6-(pyridoxal phosphate)lysine.

It belongs to the TrpB family. As to quaternary structure, tetramer of two alpha and two beta chains. Pyridoxal 5'-phosphate serves as cofactor.

The catalysed reaction is (1S,2R)-1-C-(indol-3-yl)glycerol 3-phosphate + L-serine = D-glyceraldehyde 3-phosphate + L-tryptophan + H2O. Its pathway is amino-acid biosynthesis; L-tryptophan biosynthesis; L-tryptophan from chorismate: step 5/5. The beta subunit is responsible for the synthesis of L-tryptophan from indole and L-serine. The polypeptide is Tryptophan synthase beta chain (Vibrio cholerae serotype O1 (strain ATCC 39315 / El Tor Inaba N16961)).